Reading from the N-terminus, the 1404-residue chain is MKDLLKFLKQQSKTEEFEGIKIGLASPDLIRSWSFGEVKKPETINYRTFKPEREGLFCARIFGPVKDYECLCGKYKRLKHRGVICEKCGVEVTQTKVRRERMGHIDLASPVAHIWFLKSLPSRIGLMLDMTLRDIERVLYFESFVVIEPGMTSLERGQMLTEENYLDALEEYGDEFDAKMGAEAVLELLRAIELEKEIEMMREELPSINSETRRKKVTKRLKLIEAFFTSGNKPEWMILKVLPVLPPDLRPLVPLDGGRFATSDLNDLYRRVINRNNRLKRLLDLAAPDIIVRNEKRMLQESVDALLDNGRRGRAITGSNKRPLKSLADMIKGKQGRFRQNLLGKRVDYSGRSVITVGPTLRLHQCGLPKKMALELFKPFIYGKLEGRGLATTIKAAKKMVEREVPEVWDVLDDVIREHPVMLNRAPTLHRLGIQAFEPVLIEGKAIQLHPLVCAAYNADFDGDQMAVHVPLTLEAQLEARSLMMSTNNILSPANGEPVITPSQDVVLGLYYTSRERINGKGEGMAFSDVAEAEKAYRTGVAELHARVKVRITETATNEAGEKVKTRRIVDTTVGRALLSQILPKGLSYDLVNQNMGKKQISKLLNTCYRQLGLKDTVIFADQLMYTGFHFATISGASVGIDDMVIPDEKYTLVADAEAEVLEIQEQFQSGLVTAGERYNKVIDIWASANEKVSKAMMANLSKETVVNRDGVEEQQESFNSIYMMADSGARGSAAQIRQLAGMRGLMAKPDGSIIETPIVANFREGLNVSQYFISTHGARKGLADTALKTANSGYLTRRLVDVAQDLVVIEDDCGTFEGLTMKPLIEGGDVVEPLRERVLGRVVAQDVFKPGTEEVLVPRNTLLDEAWCDIVEDNSIDEMIVRSVISCDTDFGVCKACYGRDLARGHIINQGEAIGVVAAQSIGEPGTQLTMRTFHIGGAASRASAENNVQVKNSGTLKLHNAKYVTNSNGKLVIVSRSSELAIIDELGREKERYKVPYGTVLEKLEDDGVSAGEIIAKWDPHTHPIISEVAGSIKFVDMIEGVTMTRQTDELTGLSSIVVLEVGQRPTAGKEMRPMIRLVAADGGDLMIPGTEVPAQYFLPGHAIVNLDDNAPINVGDALARIPQESSKTRDITGGLPRVADLFEARKPKEPAILAEVSGTISFGKETKGKRRLVITPADGGEHYEEMIPKWRNLNVFEGEKVERGEVIADGPEAAHDILRLRGIHNVANYIVNEVQDVYRLQGVKINDKHIEVIIRQMLRKCEIVDAGDSEFLPGEQAEVSRVKIANRELEAQGKQPATFERELLGITKASLATESFISAASFQETTRVLTEAAVGGKSDKLRGLKENVIVGRLIPAGTGYSYHQKRAEAAAKPAATEAPAISASEAEQNLADLLNLAGSND.

Cysteine 70, cysteine 72, cysteine 85, and cysteine 88 together coordinate Zn(2+). Mg(2+) contacts are provided by aspartate 460, aspartate 462, and aspartate 464. Cysteine 814, cysteine 888, cysteine 895, and cysteine 898 together coordinate Zn(2+).

Belongs to the RNA polymerase beta' chain family. As to quaternary structure, the RNAP catalytic core consists of 2 alpha, 1 beta, 1 beta' and 1 omega subunit. When a sigma factor is associated with the core the holoenzyme is formed, which can initiate transcription. Requires Mg(2+) as cofactor. It depends on Zn(2+) as a cofactor.

The enzyme catalyses RNA(n) + a ribonucleoside 5'-triphosphate = RNA(n+1) + diphosphate. In terms of biological role, DNA-dependent RNA polymerase catalyzes the transcription of DNA into RNA using the four ribonucleoside triphosphates as substrates. The polypeptide is DNA-directed RNA polymerase subunit beta' (Shewanella pealeana (strain ATCC 700345 / ANG-SQ1)).